The following is a 243-amino-acid chain: Carboxy-S-adenosyl-L-methionine synthase (243 aa).

Residues tyrosine 40, 65 to 67 (GCS), 90 to 91 (DN), 118 to 119 (DI), asparagine 133, and arginine 200 contribute to the S-adenosyl-L-methionine site.

It belongs to the class I-like SAM-binding methyltransferase superfamily. Cx-SAM synthase family. As to quaternary structure, homodimer.

The catalysed reaction is prephenate + S-adenosyl-L-methionine = carboxy-S-adenosyl-L-methionine + 3-phenylpyruvate + H2O. Catalyzes the conversion of S-adenosyl-L-methionine (SAM) to carboxy-S-adenosyl-L-methionine (Cx-SAM). The protein is Carboxy-S-adenosyl-L-methionine synthase of Shewanella halifaxensis (strain HAW-EB4).